Here is a 466-residue protein sequence, read N- to C-terminus: Glycine--tRNA ligase (466 aa).

The substrate site is built by Arg-104 and Glu-178. Residues 210–212 (RNE), 220–225 (FRTREF), 294–295 (EL), and 338–341 (GADR) contribute to the ATP site. 225-229 (FEQME) is a substrate binding site. 334–338 (EPSLG) contacts substrate.

It belongs to the class-II aminoacyl-tRNA synthetase family. As to quaternary structure, homodimer.

Its subcellular location is the cytoplasm. It carries out the reaction tRNA(Gly) + glycine + ATP = glycyl-tRNA(Gly) + AMP + diphosphate. Functionally, catalyzes the attachment of glycine to tRNA(Gly). In Geobacillus thermodenitrificans (strain NG80-2), this protein is Glycine--tRNA ligase.